Reading from the N-terminus, the 311-residue chain is tRNA (cytosine(49)-C(5))-methyltransferase (311 aa).

Residues 118 to 124 (AAAPGSK), Asp-142, Asp-169, and Asp-186 contribute to the S-adenosyl-L-methionine site. Cys-239 acts as the Nucleophile in catalysis.

This sequence belongs to the class I-like SAM-binding methyltransferase superfamily. RsmB/NOP family. In terms of assembly, forms a tripartite complex with archease and tRNA. Binds only the oligomeric forms of the archease.

It localises to the cytoplasm. The catalysed reaction is cytidine(49) in tRNA precursor + S-adenosyl-L-methionine = 5-methylcytidine(49) in tRNA precursor + S-adenosyl-L-homocysteine + H(+). With respect to regulation, substrate specificity and tendency to aggregate are influenced by archease. Its function is as follows. Catalyzes AdoMet-dependent formation of m5C in tRNA. In the presence of protein archease, specifically methylates the cytosine at position 49 (m5C49) of tRNA. In the absence of archease, catalyzes the formation of m5C at many locations in tRNAs or rRNAs. The protein is tRNA (cytosine(49)-C(5))-methyltransferase of Pyrococcus abyssi (strain GE5 / Orsay).